A 64-amino-acid chain; its full sequence is Large ribosomal subunit protein bL35 (64 aa).

Over residues 1–10 (MPKMKTNSAA) the composition is skewed to polar residues. The disordered stretch occupies residues 1 to 64 (MPKMKTNSAA…SKNMKKLLGR (64 aa)).

Belongs to the bacterial ribosomal protein bL35 family.

The protein is Large ribosomal subunit protein bL35 of Bifidobacterium adolescentis (strain ATCC 15703 / DSM 20083 / NCTC 11814 / E194a).